We begin with the raw amino-acid sequence, 311 residues long: Tricarboxylate transport protein, mitochondrial (311 aa).

Residues 1–13 (MAAPRGPRALSAA) constitute a propeptide, removed in mature form. The interval 1–21 (MAAPRGPRALSAAAPGSGKPK) is disordered. 3 Solcar repeats span residues 23–111 (THPG…LSNH), 122–208 (RRGL…LRNW), and 218–303 (MNPL…VVKL). The next 3 helical transmembrane spans lie at 29–46 (ILAGGLAGGIEICITFPT), 86–105 (GLSSLLYGSIPKAAVRFGMF), and 129–143 (LGAGVAEAVVVVCPM). S156 is modified (phosphoserine). The next 3 membrane-spanning stretches (helical) occupy residues 183–202 (GLTATVLKQGSNQAIRFFVM), 224–241 (GVFGATAGAASVFGNTPL), and 278–297 (GTVPRLGRVCLDVAIVFIIY).

The protein belongs to the mitochondrial carrier (TC 2.A.29) family. In terms of processing, possesses a short cleavable presequence, which, however, is found to be dispensable both for targeting to mitochondria and insertion into the inner membrane. However, the presequence is required to keep SLC25A1 in a soluble state and thus in an import-competent state. Mature SLC25A1 lacking the presequence is prone to aggregation. As to expression, expressed minimally but ubiquitously throughout the adult brain. Detected at higher levels in the olfactory bulb, neocortex and cerebellum. Also expressed in a subset of large cells in the globus pallidus.

It localises to the mitochondrion inner membrane. The protein localises to the mitochondrion membrane. The catalysed reaction is (S)-malate(in) + citrate(out) = (S)-malate(out) + citrate(in). It catalyses the reaction D-threo-isocitrate(in) + citrate(out) = D-threo-isocitrate(out) + citrate(in). It carries out the reaction citrate(out) + succinate(in) = citrate(in) + succinate(out). The enzyme catalyses cis-aconitate(in) + citrate(out) = cis-aconitate(out) + citrate(in). The catalysed reaction is trans-aconitate(in) + citrate(out) = trans-aconitate(out) + citrate(in). It catalyses the reaction phosphoenolpyruvate(in) + citrate(out) = phosphoenolpyruvate(out) + citrate(in). It carries out the reaction maleate(in) + citrate(out) = maleate(out) + citrate(in). Mitochondrial electroneutral antiporter that exports citrate from the mitochondria into the cytosol in exchange for malate. Also able to mediate the exchange of citrate for isocitrate, phosphoenolpyruvate, cis-aconitate and to a lesser extent trans-aconitate, maleate and succinate. In the cytoplasm, citrate plays important roles in fatty acid and sterol synthesis, regulation of glycolysis, protein acetylation, and other physiopathological processes. The chain is Tricarboxylate transport protein, mitochondrial from Mus musculus (Mouse).